Consider the following 306-residue polypeptide: Ribosomal protein L11 methyltransferase (306 aa).

4 residues coordinate S-adenosyl-L-methionine: Thr-154, Gly-179, Asp-201, and Asn-242.

It belongs to the methyltransferase superfamily. PrmA family.

The protein localises to the cytoplasm. The enzyme catalyses L-lysyl-[protein] + 3 S-adenosyl-L-methionine = N(6),N(6),N(6)-trimethyl-L-lysyl-[protein] + 3 S-adenosyl-L-homocysteine + 3 H(+). Methylates ribosomal protein L11. The polypeptide is Ribosomal protein L11 methyltransferase (Xylella fastidiosa (strain 9a5c)).